The sequence spans 135 residues: UPF0102 protein Aave_0630 (135 aa).

Residues 1–21 form a disordered region; it reads MGILEKKTAGPGGAARKTTTR.

It belongs to the UPF0102 family.

This Paracidovorax citrulli (strain AAC00-1) (Acidovorax citrulli) protein is UPF0102 protein Aave_0630.